We begin with the raw amino-acid sequence, 347 residues long: Tetraacyldisaccharide 4'-kinase (347 aa).

Residue 64 to 71 coordinates ATP; it reads YVGGTGKT.

The protein belongs to the LpxK family.

It catalyses the reaction a lipid A disaccharide + ATP = a lipid IVA + ADP + H(+). The protein operates within glycolipid biosynthesis; lipid IV(A) biosynthesis; lipid IV(A) from (3R)-3-hydroxytetradecanoyl-[acyl-carrier-protein] and UDP-N-acetyl-alpha-D-glucosamine: step 6/6. Its function is as follows. Transfers the gamma-phosphate of ATP to the 4'-position of a tetraacyldisaccharide 1-phosphate intermediate (termed DS-1-P) to form tetraacyldisaccharide 1,4'-bis-phosphate (lipid IVA). In Bordetella bronchiseptica (strain ATCC BAA-588 / NCTC 13252 / RB50) (Alcaligenes bronchisepticus), this protein is Tetraacyldisaccharide 4'-kinase.